A 344-amino-acid polypeptide reads, in one-letter code: N-acetyl-gamma-glutamyl-phosphate reductase (344 aa).

Residue Cys-150 is part of the active site.

It belongs to the NAGSA dehydrogenase family. Type 1 subfamily.

It is found in the cytoplasm. The enzyme catalyses N-acetyl-L-glutamate 5-semialdehyde + phosphate + NADP(+) = N-acetyl-L-glutamyl 5-phosphate + NADPH + H(+). Its pathway is amino-acid biosynthesis; L-arginine biosynthesis; N(2)-acetyl-L-ornithine from L-glutamate: step 3/4. Catalyzes the NADPH-dependent reduction of N-acetyl-5-glutamyl phosphate to yield N-acetyl-L-glutamate 5-semialdehyde. The polypeptide is N-acetyl-gamma-glutamyl-phosphate reductase (Pseudomonas entomophila (strain L48)).